A 531-amino-acid polypeptide reads, in one-letter code: Peptide chain release factor 3 (531 aa).

Residues 10 to 278 form the tr-type G domain; that stretch reads RRRRTFAIIS…SLIDWAPAPK (269 aa). Residues 19-26, 87-91, and 141-144 contribute to the GTP site; these read SHPDAGKT, DTPGH, and NKYD.

This sequence belongs to the TRAFAC class translation factor GTPase superfamily. Classic translation factor GTPase family. PrfC subfamily.

The protein localises to the cytoplasm. In terms of biological role, increases the formation of ribosomal termination complexes and stimulates activities of RF-1 and RF-2. It binds guanine nucleotides and has strong preference for UGA stop codons. It may interact directly with the ribosome. The stimulation of RF-1 and RF-2 is significantly reduced by GTP and GDP, but not by GMP. The polypeptide is Peptide chain release factor 3 (Neisseria gonorrhoeae (strain ATCC 700825 / FA 1090)).